Reading from the N-terminus, the 298-residue chain is Beta-soluble NSF attachment protein (298 aa).

The protein belongs to the SNAP family. Interacts with PRKCABP, and disrupts the interaction between GRIA2 and PRKCABP, leading to the internalization of GRIA2.

It is found in the membrane. In terms of biological role, required for vesicular transport between the endoplasmic reticulum and the Golgi apparatus. The polypeptide is Beta-soluble NSF attachment protein (NAPB) (Homo sapiens (Human)).